Reading from the N-terminus, the 220-residue chain is Large ribosomal subunit protein eL15 (220 aa).

Positions 197-207 (KKRHEASRGAR) are enriched in basic and acidic residues. The segment at 197–220 (KKRHEASRGARDPWQIAEKLKEEK) is disordered.

Belongs to the eukaryotic ribosomal protein eL15 family.

This Desulfurococcus amylolyticus (strain DSM 18924 / JCM 16383 / VKM B-2413 / 1221n) (Desulfurococcus kamchatkensis) protein is Large ribosomal subunit protein eL15.